The chain runs to 149 residues: Sperm surface protein Sp17 (149 aa).

Residues 83–96 (CEQELAKSSGREET) show a composition bias toward basic and acidic residues. The segment at 83–114 (CEQELAKSSGREETPVTPFEESTEEEREQEEA) is disordered. Positions 103–113 (ESTEEEREQEE) are enriched in acidic residues. The 30-residue stretch at 112–141 (EEAAALKIQSLFRGHVAREEVKKMKSDKNE) folds into the IQ domain.

In terms of assembly, homodimer. May interact with ROPN1. As to expression, testis- and sperm-specific.

It is found in the membrane. Functionally, sperm surface zona pellucida binding protein. Helps to bind spermatozoa to the zona pellucida with high affinity. Might function in binding zona pellucida and carbohydrates. This Mus musculus (Mouse) protein is Sperm surface protein Sp17 (Spa17).